The chain runs to 958 residues: Coiled-coil domain-containing protein 33 (958 aa).

The C2 domain occupies Ser214 to Ala353. Over residues Ser602–Pro617 the composition is skewed to polar residues. Residues Ser602–Glu628 are disordered. 2 coiled-coil regions span residues Asp632–Arg774 and Phe859–Glu899. The tract at residues Glu899–Thr958 is disordered. 2 stretches are compositionally biased toward polar residues: residues Pro907–Thr920 and Gln949–Thr958.

The chain is Coiled-coil domain-containing protein 33 (CCDC33) from Homo sapiens (Human).